The sequence spans 493 residues: Cardiolipin synthase 1 (493 aa).

The next 2 helical transmembrane spans lie at 13-33 and 45-65; these read FTII…IIIF and WAWL…YLFF. 2 PLD phosphodiesterase domains span residues 228 to 255 and 406 to 433; these read MNNR…GDEY and ENGF…DFRS. Active-site residues include His233, Lys235, Asp240, His411, Lys413, and Asp418.

Belongs to the phospholipase D family. Cardiolipin synthase subfamily.

It is found in the cell membrane. It carries out the reaction 2 a 1,2-diacyl-sn-glycero-3-phospho-(1'-sn-glycerol) = a cardiolipin + glycerol. Functionally, catalyzes the reversible phosphatidyl group transfer from one phosphatidylglycerol molecule to another to form cardiolipin (CL) (diphosphatidylglycerol) and glycerol. The chain is Cardiolipin synthase 1 (cls1) from Staphylococcus aureus (strain MRSA252).